A 441-amino-acid polypeptide reads, in one-letter code: C4-dicarboxylate transport protein (441 aa).

The Cytoplasmic portion of the chain corresponds to methionine 1–glycine 30. The chain crosses the membrane as a helical span at residues isoleucine 31–aspartate 49. The Periplasmic portion of the chain corresponds to alanine 50–alanine 68. Residues threonine 69–alanine 87 traverse the membrane as a helical segment. At methionine 88–leucine 99 the chain is on the cytoplasmic side. Residues valine 100–aspartate 118 form a helical membrane-spanning segment. Residues proline 119–threonine 149 are Periplasmic-facing. Residues threonine 150–valine 168 traverse the membrane as a helical segment. The Cytoplasmic segment spans residues leucine 169–glycine 171. Residues isoleucine 172 to alanine 190 form a helical membrane-spanning segment. The Periplasmic segment spans residues leucine 191 to glycine 209. The helical transmembrane segment at alanine 210–asparagine 228 threads the bilayer. Residues leucine 229–phenylalanine 241 are Cytoplasmic-facing. The helical transmembrane segment at leucine 242–leucine 260 threads the bilayer. Residues serine 261–alanine 281 lie on the Periplasmic side of the membrane. A helical membrane pass occupies residues alanine 282–valine 300. The Cytoplasmic portion of the chain corresponds to glycine 301–threonine 320. A helical transmembrane segment spans residues leucine 321–glutamine 339. Over isoleucine 340–serine 350 the chain is Periplasmic. The helical transmembrane segment at lysine 351 to serine 369 threads the bilayer. The Cytoplasmic portion of the chain corresponds to valine 370 to glycine 378. A helical membrane pass occupies residues methionine 379 to phenylalanine 398. The Periplasmic portion of the chain corresponds to valine 399–threonine 405. A helical transmembrane segment spans residues isoleucine 406–leucine 424. Residues glycine 425–glutamate 441 lie on the Cytoplasmic side of the membrane.

This sequence belongs to the dicarboxylate/amino acid:cation symporter (DAACS) (TC 2.A.23) family.

The protein localises to the cell inner membrane. Functionally, responsible for the transport of dicarboxylates such as succinate, fumarate, and malate from the periplasm across the inner membrane. This transport system plays an important role in the energy supply of rhizobium-legume symbionts. In Rhizobium meliloti (strain 1021) (Ensifer meliloti), this protein is C4-dicarboxylate transport protein (dctA).